The chain runs to 96 residues: Phosphoribosyl-ATP pyrophosphatase (96 aa).

The protein belongs to the PRA-PH family.

Its subcellular location is the cytoplasm. The enzyme catalyses 1-(5-phospho-beta-D-ribosyl)-ATP + H2O = 1-(5-phospho-beta-D-ribosyl)-5'-AMP + diphosphate + H(+). It functions in the pathway amino-acid biosynthesis; L-histidine biosynthesis; L-histidine from 5-phospho-alpha-D-ribose 1-diphosphate: step 2/9. The protein is Phosphoribosyl-ATP pyrophosphatase of Methanococcus maripaludis (strain C6 / ATCC BAA-1332).